Here is a 386-residue protein sequence, read N- to C-terminus: Methionine aminotransferase (386 aa).

Lys236 carries the N6-(pyridoxal phosphate)lysine modification.

The protein belongs to the class-I pyridoxal-phosphate-dependent aminotransferase family. Homodimer. Pyridoxal 5'-phosphate serves as cofactor.

It localises to the cytoplasm. The enzyme catalyses a 2-oxocarboxylate + L-methionine = 4-methylsulfanyl-2-oxobutanoate + an L-alpha-amino acid. Functionally, shows aminotransferase activity with methionine and histidine as substrates, and to a lesser extent also with phenylalanine. This is Methionine aminotransferase (ybdL) from Escherichia coli (strain K12).